A 1400-amino-acid chain; its full sequence is MMASFQRSNSHDKVRRIVAEEGRTARNLIAWSVPLESKDDDGKPKCQTGGKSKRTIQGTHKTTKQSTAVDCKITSSTTGDKHFDKSPTKTRHPRKIDLRARYWAFLFDNLRRAVDEIYVTCESDQSVVECKEVLMMLDNYVRDFKALIDWIQLQEKLEKTDAQSRPTSLAWEVKKMSPGRHVIPSPSTDRINVTSNARRSLNFGGSTGTVPAPRLAPTGVSWADKVKAHHTGSTASSEITPAQSCPPMTVQKASRKNERKDAEGWETVQRGRPIRSRSTAVMPKVSLATEATRSKDDSDKENVCLLPDESIQKGQFVGDGTSNTIESHPKDSLHSCDHPLAEKTQFTVSTLDDVKNSGSIRDNYVRTSEISAVHIDTECVSVMLQAGTPPLQVNEEKFPAEKARIENEMDPSDISNSMAEVLAKKEELADRLEKANEEAIASAIAEEEQLTREIEAEENNDINIETDNDSDFSASMGSGSVSFCGMSMDWNDVLADYEARESWRQNTSWGDIVEEEPARPPGHGIHMHEKLSSPSRKRTIAESKKKHEEKQMKAQQLREKLREEKTLKLQKLLEREKDVRKWKEELLDQRRRMMEEKLLHAEFKREVQLQAIVKKAQEEEAKVNEIAFINTLEAQNKRHDVLSKLKEYEQRLNELQEERQRRQEEKQARDEAVQERKRALEAERQARVEELLMKRKEQEARIEQQRQEKEKAREDAARERARDREERLAALTAAQQEAMEELQKKIQLKHDESIRRHMEQIEQRKEKAAELSSGRHANTDYAPKLTPYERKKQCSLCNVLISSEVYLFSHVKGRKHQQAVRENTSIQGRELSDEEVEHLSLKKYIIDIVVESTAPAEALKDGEERQKNKKKAKKIKARMNFRAKEYESLMETKNSGSDSPYKAKLQRLAKDLLKQVQVQDSGSWANNKVSALDRTLGEITRILEKENVADQIAFQAAGGLTALEHILQAVVPATNVNTVLRIPPKSLCNAINVYNLTCNNCSENCSDVLFSNKITFLMDLLIHQLTVYVPDENNTILGRNTNKQVFEGLTTGLLKVSAVVLGCLIANRPDGNCQPATPKIPTQEMKNKPSQGDPFNNRVQDLISYVVNMGLIDKLCACFLSVQGPVDENPKMAIFLQHAAGLLHAMCTLCFAVTGRSYSIFDNNRQDPTGLTAALQATDLAGVLHMLYCVLFHGTILDPSTASPKENYTQNTIQVAIQSLRFFNSFAALHLPAFQSIVGAEGLSLAFRHMASSLLGHCSQVSCESLLHEVIVCVGYFTVNHPDNQVIVQSGRHPTVLQKLCQLPFQYFSDPRLIKVLFPSLIAACYNNHQNKIILEQEMSCVLLATFIQDLAQTPGQAENQPYQPKGKCLGSQDYLELANRFPQQAWEEARQFFLKKEKK.

Disordered stretches follow at residues 36–61 (ESKD…GTHK), 226–277 (VKAH…IRSR), 517–550 (PARP…HEEK), and 701–723 (RIEQ…RARD). The span at 231-243 (TGSTASSEITPAQ) shows a compositional bias: polar residues. Basic and acidic residues predominate over residues 539–550 (TIAESKKKHEEK). The C2H2-type zinc finger occupies 792–816 (KQCSLCNVLISSEVYLFSHVKGRKH). Residue Ser-832 is modified to Phosphoserine.

In terms of assembly, interacts with CCNA2/CDK2 complex, but not with CCNA2/CDC2, CCNB1/CDC2 or CCNE1/CDK2 complexes, at multiple phases of the cell cycle, including S and G2/M. Post-translationally, phosphorylated in vitro by the CCNA2/CDK2 complex. As to expression, widely expressed with high expression in testis. Isoform 1 is detected in various tissues, including retina, fetal and adult brain. Isoform 2 is expressed in the retina at high levels, and in the brain at very low levels.

Its subcellular location is the endoplasmic reticulum. It localises to the nucleus. Its function is as follows. CCNA2/CDK2 regulatory protein that transiently maintains CCNA2 in the cytoplasm. The sequence is that of S phase cyclin A-associated protein in the endoplasmic reticulum from Homo sapiens (Human).